A 767-amino-acid chain; its full sequence is Receptor-type tyrosine-protein phosphatase-like ida-1 (767 aa).

A signal peptide spans 1–19 (MRFFHSIIVLLFSISTGSA). Residues 20-398 (FLLYGCNLSE…SLPVESSERD (379 aa)) are Lumenal-facing. 2 N-linked (GlcNAc...) asparagine glycosylation sites follow: asparagine 26 and asparagine 146. A helical membrane pass occupies residues 399 to 419 (WLLMPVLFVCAFTVTALGLVA). The Cytoplasmic portion of the chain corresponds to 420–767 (AVQIARSRRH…NHLLKSIATK (348 aa)). A Tyrosine-protein phosphatase domain is found at 527 to 756 (SQNRTILPFD…KLVYGCVAQE (230 aa)).

The protein belongs to the protein-tyrosine phosphatase family. Receptor class 8 subfamily. In terms of processing, proteolytically cleaved probably at a dibasic consensus sequence by egl-3. In hermaphrodites specifically expressed in neurons and in particular in the head nerve ring (ADE, ALA, ASI, ASK, AUA, ASG, AVH and AVJ neurons), in the ventral nerve cord, pre-anal ganglia (PVP neuron), in the tail (PHA, PHB and PHC neurons) and in vulval motor neurons VC and HSN and the vulval uv1 cells. In males, also expressed in neurons anterior to the nerve ring and male-specific neurons in the tail.

It localises to the cytoplasmic vesicle membrane. It is found in the perikaryon. Its subcellular location is the cell projection. The protein localises to the axon. The protein resides in the dendrite. Regulates dense-core vesicle (DCV) trafficking and/or secretion. Probably by controlling DCV trafficking, plays a role in the AVG neuron-mediated formation of the right axon tract of the ventral nerve cord. Involved in locomotion by regulating acetylcholine release. Probably by controlling the secretion of FLP neuropeptides, regulates the turning step of male mating behavior. Plays a role in preventing dauer formation. The polypeptide is Receptor-type tyrosine-protein phosphatase-like ida-1 (Caenorhabditis elegans).